The following is a 139-amino-acid chain: Non-structural protein 1 (139 aa).

A DLNP; interaction with MAP1B motif is present at residues 136 to 139 (DLNS).

It belongs to the pneumovirus non-structural protein 1 family. Monomer. Homomultimer. Heteromultimer with NS2. Interacts with the matrix protein M. Interacts with host ELOC and CUL2; this interaction allows NS1 to form an active E3 ligase with ELOC and CUL2. Interacts with host IRF3; this interaction leads to the disrupted association of IRF3 with CREBBP and thus reduced binding of IRF3 to the IFN-beta promoter. Interacts with host MAVS; this interaction prevents MAVS binding to RIGI and inhibits signaling pathway leading to interferon production. Interacts with host MAP1B/microtubule-associated protein 1B. Interacts with host TRIM25 (via SPRY domain); this interaction suppresses RIGI ubiquitination and results in decreased interaction between RIGI and MAVS.

The protein localises to the host cytoplasm. It localises to the host mitochondrion. It is found in the host nucleus. Functionally, plays a major role in antagonizing the type I IFN-mediated antiviral response by degrading or inhibiting multiple cellular factors required for either IFN induction or response pathways. Acts cooperatively with NS2 to repress activation and nuclear translocation of host IFN-regulatory factor IRF3. Also disrupts the association of IRF3 with CREBBP. Interacts with host mitochondrial-associated membrane (MAM) MAVS and prevents the interaction with RIGI. Interacts with TRIM25 to suppress TRIM25-mediated RIGI ubiquitination and thereby RIGI-MAVS interaction. Together with NS2, participates in the proteasomal degradation of host STAT2, IRF3, IRF7, TBK1 and RIGI through a NS-degradasome involving CUL2 and Elongin-C. The degradasome requires an intact mitochondrial MAVS. Decreases the levels of host TRAF3 and IKBKE/IKK-epsilon. As functions other than disruptions of the type I IFN-mediated antiviral signaling pathways, induces host SOCS1 and SOCS3 expression. Suppresses premature apoptosis by an NF-kappa-B-dependent, interferon-independent mechanism and thus facilitates virus growth. Additionally, NS1 may serve some inhibitory role in viral transcription and RNA replication. Suppresses proliferation and activation of host CD103+ CD8+ cytotoxic T-lymphocytes and Th17 helper T-lymphocytes. The protein is Non-structural protein 1 (1C) of Human respiratory syncytial virus B (strain 18537).